The sequence spans 214 residues: Probable maleylacetoacetate isomerase (214 aa).

A GST N-terminal domain is found at 4–84 (QKPVLYSYWR…YLEETHPDVP (81 aa)). Glutathione contacts are provided by residues 14-19 (SSCSWR), V56, 68-69 (ES), Q108, and 112-114 (NLK). Residues 89-212 (DPIKRAHARA…HPDNQPDTGL (124 aa)) enclose the GST C-terminal domain.

The protein belongs to the GST superfamily. Zeta family. Glutathione serves as cofactor.

The protein resides in the cytoplasm. The catalysed reaction is 4-maleylacetoacetate = 4-fumarylacetoacetate. The protein operates within amino-acid degradation; L-phenylalanine degradation; acetoacetate and fumarate from L-phenylalanine: step 5/6. The chain is Probable maleylacetoacetate isomerase (gst-42) from Caenorhabditis elegans.